Consider the following 160-residue polypeptide: Biogenesis of lysosome-related organelles complex 1 subunit 5 (160 aa).

This sequence belongs to the BLOC1S5 family. Component of the biogenesis of lysosome-related organelles complex-1 (BLOC-1) composed of Blos1, Blos2, Blos3, Blos4, Dysb, Muted, Pldn and Snapin.

Component of the biogenesis of lysosome-related organelles complex-1 (BLOC-1) involved in pigment granule biogenesis. The chain is Biogenesis of lysosome-related organelles complex 1 subunit 5 from Drosophila melanogaster (Fruit fly).